A 617-amino-acid chain; its full sequence is Zinc metalloproteinase nas-36 (617 aa).

The N-terminal stretch at 1-22 (MRLCHSIILFNSLISISICSKA) is a signal peptide. A propeptide spanning residues 23–126 (DDPALLVASE…SKDKTKRLRR (104 aa)) is cleaved from the precursor. The region spanning 127–322 (SFVSDKTATW…VATINTAYCK (196 aa)) is the Peptidase M12A domain. Intrachain disulfides connect Cys-169–Cys-321, Cys-192–Cys-211, Cys-325–Cys-346, Cys-348–Cys-357, Cys-368–Cys-397, Cys-425–Cys-445, Cys-519–Cys-550, Cys-523–Cys-555, and Cys-535–Cys-540. N-linked (GlcNAc...) asparagine glycosylation is present at Asn-174. His-219 contributes to the Zn(2+) binding site. Glu-220 is a catalytic residue. His-223 and His-229 together coordinate Zn(2+). One can recognise an EGF-like domain in the interval 317–358 (NTAYCKDECKSEKTKCENGGYMRPSKCSECLCPDGLGGEKCE). The region spanning 368-482 (CGGIIKLTEE…IGFKIQAKST (115 aa)) is the CUB domain. In terms of domain architecture, TSP type-1 spans 507 to 556 (PNVWADWGEWSMCSRTCGGCGIRSRVRSCRSKKCEGRRQEFGTCNLKACP).

It depends on Zn(2+) as a cofactor. Expressed in hypodermal cells. Also detected in the hypodermal seam cells in L4 larvae and young adults. In old adult hermaphrodites, it localizes to the vulva (at protein level).

Its subcellular location is the secreted. Metalloprotease. Involved in molting, a process during larval stages in which a new cuticle is formed and the old cuticle is shed. The chain is Zinc metalloproteinase nas-36 (nas-36) from Caenorhabditis elegans.